We begin with the raw amino-acid sequence, 83 residues long: Exodeoxyribonuclease 7 small subunit (83 aa).

The protein belongs to the XseB family. As to quaternary structure, heterooligomer composed of large and small subunits.

It localises to the cytoplasm. It carries out the reaction Exonucleolytic cleavage in either 5'- to 3'- or 3'- to 5'-direction to yield nucleoside 5'-phosphates.. Its function is as follows. Bidirectionally degrades single-stranded DNA into large acid-insoluble oligonucleotides, which are then degraded further into small acid-soluble oligonucleotides. This chain is Exodeoxyribonuclease 7 small subunit, found in Brucella melitensis biotype 1 (strain ATCC 23456 / CCUG 17765 / NCTC 10094 / 16M).